The sequence spans 1475 residues: MEEPRVHNLEKLMDEGVAGIEQLQILTAFKTHVKKELVRDDSIERYFDALVRFLGQPVEDRKVQQLGHSSLCYLIKRVAMQQPGRFQGARIRDLVRVVLLQEQLQERKVWGSAVKSLEAIYLCKPQAFEAELASICAATRGSDRTKCLLFMDELIQLQQMNNRNPMEVVNRFVDLWVDVLNESDPGCSKRDIELIHDILKKYFNEAMLQQFAERVVNTRSLKHFMHTEHAAPSSAQTTSSMPSGPFDVDEELTRVMEELPPNVVNSNIGEARDYLSFEHVVKDLEHITVAFQAIKETEHNWKQRQEGIITLRKIVNGNVSRQFPDEFIQACRDLNIADCISKAALSLRTTLSSHSCHLIKEMAFKLGPLLEPLLDVLFVPLRSLLSATKKISSQTAFATAAILLCTAPYHNRLFQQCIALSRDKNVSPRTFAAVFLRIYIIRFHRRLEHSSVLVEEWLHKGLTDPQTQVREAMRVTLWYWYVPNAQSAKKVLDSMPHQMKRIIEGSIPTYLNIEYHVTASVSSNESSRRSSFGVRRYPSYAAPTQSSNLQKLAANSLGGSANVRSLSENTNRHLTTYTSLAKKSLATRHESLSPRVASSGLISSAGAANLSSENLELTEELTSNHSNTLLKKYLNTNEPAVIRKSEGEPTGDLESMYSHLSSTTLQEKQQGLLFLKNLLLLKAPLDIAKLNPLLVQLSIQSPKSFKDLLTLASFHPLIPLANLIELFAINDLPTNVLLDEFSSTDLLETVIHSFQTFFPDHHDQLFLYYVKYRSVIFNYCFGIMIDLLSGDFAFSEGSTLFREVCTRIIEACGNDFNMEKYYTLISILYRADKSQFVELLRDAPVSSKFKIANELQRCDSTFNLHSIMSRESTAESHHSDPNQQYKDGAHGGDARDANGTSNSSSDSDNEPDLESTKHLLEMTMVNPIGLGCVENVLQSHIHAYKQDQQHQDPIAEKSLSTVAEVNDEDGDGSTTTQMKLMGANTTEPSNESDKDKTSDIVAESMRGTDDPNYAKLCAIDSALIDSEDEPELNNFGGLKGLTEMTKVVSIYEKLDGDEDVEMVDDEKFKDPVEQENQETGLDEIFRDEKHDQSVKFNDIPRIIDVNKSWDRYDGESIEDTSGNTSHGTDENRPASFGTVSELVRKEMEKSPTLPLNEEDSKLLSDGINEIELKHKDDPFVRDSEDCENGTPQDRSNFLSCKQHIDILGALPDNSLTAFELGLLEILDVSDMDANRILETVNTIQNSRLRSADVSRIVGAIVSHCTDPLLHWLTDSNGLQRLWSMLTALSTADGFSDSYKCVVLYTALLIANSQLSSSHLSTDELSDAWAFALRELSKLSSYNNETYIACCELRETLIEHYSSSYLPQLLESAIKELNVAEDRVRITFLLQTLSDALDHMNTLLSLEVLGSMSSLLQQFVTNDFTEWRYHSIKLLAQIYGILVARNSPASYIRSMFSILRQPEFDLVKSYYTMDHN.

Disordered regions lie at residues 870–913 and 1113–1134; these read REST…EPDL and DGESIEDTSGNTSHGTDENRPA. Residues 887–896 show a composition bias toward basic and acidic residues; the sequence is DGAHGGDARD.

This sequence belongs to the CLASP family. In terms of assembly, interacts with microtubules.

It localises to the cytoplasm. The protein localises to the cytoskeleton. Its subcellular location is the nucleus. It is found in the spindle. In terms of biological role, microtubule binding protein that promotes the stabilization of dynamic microtubules. Required for mitotic spindle formation. The protein is Protein STU1 (STU1) of Eremothecium gossypii (strain ATCC 10895 / CBS 109.51 / FGSC 9923 / NRRL Y-1056) (Yeast).